A 460-amino-acid chain; its full sequence is ATP synthase subunit beta (460 aa).

150–157 (GGAGVGKT) is a binding site for ATP.

It belongs to the ATPase alpha/beta chains family. As to quaternary structure, F-type ATPases have 2 components, CF(1) - the catalytic core - and CF(0) - the membrane proton channel. CF(1) has five subunits: alpha(3), beta(3), gamma(1), delta(1), epsilon(1). CF(0) has three main subunits: a(1), b(2) and c(9-12). The alpha and beta chains form an alternating ring which encloses part of the gamma chain. CF(1) is attached to CF(0) by a central stalk formed by the gamma and epsilon chains, while a peripheral stalk is formed by the delta and b chains.

The protein localises to the cell inner membrane. It catalyses the reaction ATP + H2O + 4 H(+)(in) = ADP + phosphate + 5 H(+)(out). In terms of biological role, produces ATP from ADP in the presence of a proton gradient across the membrane. The catalytic sites are hosted primarily by the beta subunits. The protein is ATP synthase subunit beta of Pectobacterium atrosepticum (strain SCRI 1043 / ATCC BAA-672) (Erwinia carotovora subsp. atroseptica).